A 1406-amino-acid polypeptide reads, in one-letter code: DNA-directed RNA polymerase subunit beta' (1406 aa).

Zn(2+) contacts are provided by C70, C72, C85, and C88. Positions 460, 462, and 464 each coordinate Mg(2+). C814, C889, C896, and C899 together coordinate Zn(2+).

The protein belongs to the RNA polymerase beta' chain family. As to quaternary structure, the RNAP catalytic core consists of 2 alpha, 1 beta, 1 beta' and 1 omega subunit. When a sigma factor is associated with the core the holoenzyme is formed, which can initiate transcription. The cofactor is Mg(2+). It depends on Zn(2+) as a cofactor.

The enzyme catalyses RNA(n) + a ribonucleoside 5'-triphosphate = RNA(n+1) + diphosphate. DNA-dependent RNA polymerase catalyzes the transcription of DNA into RNA using the four ribonucleoside triphosphates as substrates. This Psychromonas ingrahamii (strain DSM 17664 / CCUG 51855 / 37) protein is DNA-directed RNA polymerase subunit beta'.